Consider the following 491-residue polypeptide: Protein DETOXIFICATION 56 (491 aa).

Helical transmembrane passes span 39–59 (LPLV…SVFL), 72–92 (LGFS…SAAM), 111–131 (TLFM…FLWL), 154–174 (LLYL…KAYL), 181–201 (LPIM…NIVL), 212–232 (MAVW…VIVV), 261–281 (GPCC…VLLT), 291–311 (VSIL…MLSL), 336–356 (YTTL…MIAF), 379–399 (MLIM…GEIV), 409–429 (MYAN…TLAF), and 438–458 (FLIG…IFIA).

It belongs to the multi antimicrobial extrusion (MATE) (TC 2.A.66.1) family. In terms of assembly, interacts with BCA4 and HT1. In terms of tissue distribution, preferentially expressed in guard cells.

The protein localises to the cell membrane. Its function is as follows. Could function as a HCO(3)(-) -sensing component in the CO(2) signaling pathway in guard cells. Acts as an upstream repressor of HT1. Plays a role in stomatal response to CO(2). The chain is Protein DETOXIFICATION 56 from Arabidopsis thaliana (Mouse-ear cress).